A 165-amino-acid polypeptide reads, in one-letter code: Deoxyuridine 5'-triphosphate nucleotidohydrolase (165 aa).

It belongs to the dUTPase family. As to quaternary structure, homotrimer. Mg(2+) serves as cofactor.

It is found in the host cytoplasm. The protein resides in the virion. It catalyses the reaction dUTP + H2O = dUMP + diphosphate + H(+). The viral dUTPase may play a role in lowering the dUTP concentration in natural infections to minimize misincorporation of deoxyuridine into the viral DNA and ensure the fidelity of genome replication. The chain is Deoxyuridine 5'-triphosphate nucleotidohydrolase from African swine fever virus (isolate Tick/South Africa/Pretoriuskop Pr4/1996) (ASFV).